The following is a 255-amino-acid chain: Thiazole synthase (255 aa).

The active-site Schiff-base intermediate with DXP is the lysine 96. 1-deoxy-D-xylulose 5-phosphate is bound by residues glycine 157, 184–185 (AG), and 206–207 (NT).

It belongs to the ThiG family. Homotetramer. Forms heterodimers with either ThiH or ThiS.

It localises to the cytoplasm. It carries out the reaction [ThiS sulfur-carrier protein]-C-terminal-Gly-aminoethanethioate + 2-iminoacetate + 1-deoxy-D-xylulose 5-phosphate = [ThiS sulfur-carrier protein]-C-terminal Gly-Gly + 2-[(2R,5Z)-2-carboxy-4-methylthiazol-5(2H)-ylidene]ethyl phosphate + 2 H2O + H(+). The protein operates within cofactor biosynthesis; thiamine diphosphate biosynthesis. In terms of biological role, catalyzes the rearrangement of 1-deoxy-D-xylulose 5-phosphate (DXP) to produce the thiazole phosphate moiety of thiamine. Sulfur is provided by the thiocarboxylate moiety of the carrier protein ThiS. In vitro, sulfur can be provided by H(2)S. In Clostridium acetobutylicum (strain ATCC 824 / DSM 792 / JCM 1419 / IAM 19013 / LMG 5710 / NBRC 13948 / NRRL B-527 / VKM B-1787 / 2291 / W), this protein is Thiazole synthase.